A 402-amino-acid polypeptide reads, in one-letter code: MKNIIALSSVPLVMTLGNSMLIPVLPMMEKKLSVTSFQVSLIITVYSVVAIICIPIAGYLSDRFGRKKILLPCLLIAGLGGAVAAFASTYMKNPYAMILAGRVLQGIGSAGAAPIVMPFIGDLFKGDDEKVSAGLGDIETANTSGKVLSPILGALLASWYWFVPFWFIPFFCLISFLLVLFLVAKPEEDEDAPAVSEFIKSVKKIFKQDGRWLYTVFIIGCVIMFLLFGVLFYLSDTLENKYAIDGVAKGGLLAIPLLFLSTSSFIAGKKIGKDKGRMKFCVVTGMILLTLSFIALWWNHSFYFLFVFLSFGGIGIGMALPALDALITEGIESEQCGTISSFYNSMRFIGVALGPPVFAALMSNANWIIFILSAFCSIVSLFLVLFTVDAKKSEEEKNLGTV.

Helical transmembrane passes span 4–24 (IIAL…LIPV), 39–59 (VSLI…IAGY), 69–89 (ILLP…FAST), 104–124 (LQGI…GDLF), 162–182 (FVPF…VLFL), 212–232 (WLYT…GVLF), 247–267 (VAKG…SFIA), 278–298 (MKFC…ALWW), 302–322 (FYFL…ALPA), 342–362 (FYNS…AALM), and 368–388 (IIFI…LFTV).

The protein belongs to the major facilitator superfamily.

It is found in the cell membrane. Involved in secretion of bacillibactin. This Bacillus subtilis (strain 168) protein is Bacillibactin exporter (ymfD).